The sequence spans 548 residues: Glucose-6-phosphate isomerase (548 aa).

Glu359 acts as the Proton donor in catalysis. Residues His390 and Lys510 contribute to the active site.

The protein belongs to the GPI family.

It is found in the cytoplasm. It carries out the reaction alpha-D-glucose 6-phosphate = beta-D-fructose 6-phosphate. It participates in carbohydrate biosynthesis; gluconeogenesis. Its pathway is carbohydrate degradation; glycolysis; D-glyceraldehyde 3-phosphate and glycerone phosphate from D-glucose: step 2/4. Functionally, catalyzes the reversible isomerization of glucose-6-phosphate to fructose-6-phosphate. This chain is Glucose-6-phosphate isomerase, found in Gloeobacter violaceus (strain ATCC 29082 / PCC 7421).